The sequence spans 184 residues: 3-hydroxyanthranilate 3,4-dioxygenase (184 aa).

Arginine 44 lines the O2 pocket. Residues histidine 48, glutamate 54, and histidine 92 each coordinate Fe cation. A substrate-binding site is contributed by glutamate 54. Substrate-binding residues include arginine 96 and glutamate 106. The a divalent metal cation site is built by cysteine 121, cysteine 126, cysteine 162, and cysteine 165.

Belongs to the 3-HAO family. Fe(2+) is required as a cofactor.

The protein resides in the cytoplasm. It catalyses the reaction 3-hydroxyanthranilate + O2 = (2Z,4Z)-2-amino-3-carboxymuconate 6-semialdehyde. The protein operates within cofactor biosynthesis; NAD(+) biosynthesis; quinolinate from L-kynurenine: step 3/3. Catalyzes the oxidative ring opening of 3-hydroxyanthranilate to 2-amino-3-carboxymuconate semialdehyde, which spontaneously cyclizes to quinolinate. The protein is 3-hydroxyanthranilate 3,4-dioxygenase of Pyricularia oryzae (strain 70-15 / ATCC MYA-4617 / FGSC 8958) (Rice blast fungus).